Here is a 98-residue protein sequence, read N- to C-terminus: Aspartyl/glutamyl-tRNA(Asn/Gln) amidotransferase subunit C (98 aa).

Residues 76–98 are disordered; the sequence is QVLSGAPDAEDGRFKVPAILEED.

This sequence belongs to the GatC family. As to quaternary structure, heterotrimer of A, B and C subunits.

It carries out the reaction L-glutamyl-tRNA(Gln) + L-glutamine + ATP + H2O = L-glutaminyl-tRNA(Gln) + L-glutamate + ADP + phosphate + H(+). The enzyme catalyses L-aspartyl-tRNA(Asn) + L-glutamine + ATP + H2O = L-asparaginyl-tRNA(Asn) + L-glutamate + ADP + phosphate + 2 H(+). In terms of biological role, allows the formation of correctly charged Asn-tRNA(Asn) or Gln-tRNA(Gln) through the transamidation of misacylated Asp-tRNA(Asn) or Glu-tRNA(Gln) in organisms which lack either or both of asparaginyl-tRNA or glutaminyl-tRNA synthetases. The reaction takes place in the presence of glutamine and ATP through an activated phospho-Asp-tRNA(Asn) or phospho-Glu-tRNA(Gln). The polypeptide is Aspartyl/glutamyl-tRNA(Asn/Gln) amidotransferase subunit C (Renibacterium salmoninarum (strain ATCC 33209 / DSM 20767 / JCM 11484 / NBRC 15589 / NCIMB 2235)).